The chain runs to 332 residues: o-succinylbenzoate synthase (332 aa).

K135 acts as the Proton donor in catalysis. Residues D163, E192, and D215 each coordinate Mg(2+). Residue K241 is the Proton acceptor of the active site.

This sequence belongs to the mandelate racemase/muconate lactonizing enzyme family. MenC type 1 subfamily. A divalent metal cation is required as a cofactor.

The enzyme catalyses (1R,6R)-6-hydroxy-2-succinyl-cyclohexa-2,4-diene-1-carboxylate = 2-succinylbenzoate + H2O. It functions in the pathway quinol/quinone metabolism; 1,4-dihydroxy-2-naphthoate biosynthesis; 1,4-dihydroxy-2-naphthoate from chorismate: step 4/7. Its pathway is quinol/quinone metabolism; menaquinone biosynthesis. Converts 2-succinyl-6-hydroxy-2,4-cyclohexadiene-1-carboxylate (SHCHC) to 2-succinylbenzoate (OSB). The protein is o-succinylbenzoate synthase of Vibrio cholerae serotype O1 (strain ATCC 39315 / El Tor Inaba N16961).